The following is a 545-amino-acid chain: Bifunctional purine biosynthesis protein PurH (545 aa).

One can recognise an MGS-like domain in the interval 1–150; it reads MTNTNRPIRR…KNHATVAIVT (150 aa).

The protein belongs to the PurH family.

The catalysed reaction is (6R)-10-formyltetrahydrofolate + 5-amino-1-(5-phospho-beta-D-ribosyl)imidazole-4-carboxamide = 5-formamido-1-(5-phospho-D-ribosyl)imidazole-4-carboxamide + (6S)-5,6,7,8-tetrahydrofolate. The enzyme catalyses IMP + H2O = 5-formamido-1-(5-phospho-D-ribosyl)imidazole-4-carboxamide. Its pathway is purine metabolism; IMP biosynthesis via de novo pathway; 5-formamido-1-(5-phospho-D-ribosyl)imidazole-4-carboxamide from 5-amino-1-(5-phospho-D-ribosyl)imidazole-4-carboxamide (10-formyl THF route): step 1/1. It functions in the pathway purine metabolism; IMP biosynthesis via de novo pathway; IMP from 5-formamido-1-(5-phospho-D-ribosyl)imidazole-4-carboxamide: step 1/1. The protein is Bifunctional purine biosynthesis protein PurH of Bifidobacterium longum (strain DJO10A).